The sequence spans 1438 residues: Gag-Pol polyprotein (1438 aa).

The N-myristoyl glycine; by host moiety is linked to residue Gly2. Positions 16–22 (WEKIYLR) match the Nuclear export signal motif. The Nuclear localization signal motif lies at 26-32 (KKKYMMK). 2 consecutive CCHC-type zinc fingers follow at residues 385–402 (VKCF…NCKA) and 406–423 (KGCW…NCTN). Residues 439 to 481 (GKAREFPSEETRTNSSTNRELRVQGGGTCPEGGSEERGDREQA) form a disordered region. Residues 440–450 (KAREFPSEETR) are compositionally biased toward basic and acidic residues. One can recognise a Peptidase A2 domain in the interval 507 to 576 (KEALLDTGAD…TPVNIIGRNI (70 aa)). Asp512 (for protease activity; shared with dimeric partner) is an active-site residue. In terms of domain architecture, Reverse transcriptase spans 630 to 820 (EGKISRVGPE…PPFLWMGYEL (191 aa)). 3 residues coordinate Mg(2+): Asp696, Asp771, and Asp772. An RT 'primer grip' region spans residues 813–821 (FLWMGYELH). Residues 984–1000 (WEAWWTDYWQATWIPEW) carry the Tryptophan repeat motif motif. The region spanning 1020–1143 (IPGAETFYVD…IDKLVSSGIR (124 aa)) is the RNase H type-1 domain. 4 residues coordinate Mg(2+): Asp1029, Glu1064, Asp1084, and Asp1135. An Integrase-type zinc finger spans residues 1149–1190 (DGIDKAQEEHEKYHNNWRAMASDFNLPPIVAKEIVANCDKCQ). The Zn(2+) site is built by His1158, His1162, Cys1186, and Cys1189. An Integrase catalytic domain is found at 1200–1350 (VDCSPGIWQL…SAGERIIDIL (151 aa)). 2 residues coordinate Mg(2+): Asp1210 and Asp1262. The segment at residues 1369–1416 (FRVYYRDSRDPIWKGPAKLLWKGEGAVVLQDQEEIKVVPRRKAKIIRD) is a DNA-binding region (integrase-type).

As to quaternary structure, homotrimer. Interacts with gp41 (via C-terminus). In terms of assembly, homodimer. The active site consists of two apposed aspartic acid residues. Heterodimer of p66 RT and p51 RT (RT p66/p51). Heterodimerization of RT is essential for DNA polymerase activity. Despite the sequence identities, p66 RT and p51 RT have distinct folding. As to quaternary structure, homotetramer; may further associate as a homohexadecamer. Mg(2+) is required as a cofactor. Specific enzymatic cleavages by the viral protease yield mature proteins. The protease is released by autocatalytic cleavage. The polyprotein is cleaved during and after budding, this process is termed maturation. Proteolytic cleavage of p66 RT removes the RNase H domain to yield the p51 RT subunit. In terms of processing, capsid protein p24 is phosphorylated.

The protein resides in the virion. It is found in the host nucleus. The protein localises to the host cytoplasm. Its subcellular location is the host cell membrane. It carries out the reaction Specific for a P1 residue that is hydrophobic, and P1' variable, but often Pro.. The enzyme catalyses Endohydrolysis of RNA in RNA/DNA hybrids. Three different cleavage modes: 1. sequence-specific internal cleavage of RNA. Human immunodeficiency virus type 1 and Moloney murine leukemia virus enzymes prefer to cleave the RNA strand one nucleotide away from the RNA-DNA junction. 2. RNA 5'-end directed cleavage 13-19 nucleotides from the RNA end. 3. DNA 3'-end directed cleavage 15-20 nucleotides away from the primer terminus.. It catalyses the reaction 3'-end directed exonucleolytic cleavage of viral RNA-DNA hybrid.. The catalysed reaction is DNA(n) + a 2'-deoxyribonucleoside 5'-triphosphate = DNA(n+1) + diphosphate. The viral protease is inhibited by many synthetic protease inhibitors (PIs), such as amprenavir, atazanavir, indinavir, loprinavir, nelfinavir, ritonavir and saquinavir. RT can be inhibited either by nucleoside RT inhibitors (NRTIs) or by non nucleoside RT inhibitors (NNRTIs). NRTIs act as chain terminators, whereas NNRTIs inhibit DNA polymerization by binding a small hydrophobic pocket near the RT active site and inducing an allosteric change in this region. Classical NRTIs are abacavir, adefovir (PMEA), didanosine (ddI), lamivudine (3TC), stavudine (d4T), tenofovir (PMPA), zalcitabine (ddC), and zidovudine (AZT). Classical NNRTIs are atevirdine (BHAP U-87201E), delavirdine, efavirenz (DMP-266), emivirine (I-EBU), and nevirapine (BI-RG-587). The tritherapies used as a basic effective treatment of AIDS associate two NRTIs and one NNRTI. Use of protease inhibitors in tritherapy regimens permit more ambitious therapeutic strategies. In terms of biological role, gag-Pol polyprotein and Gag polyprotein may regulate their own translation, by the binding genomic RNA in the 5'-UTR. At low concentration, Gag-Pol and Gag would promote translation, whereas at high concentration, the polyproteins encapsidate genomic RNA and then shut off translation. Matrix protein p17 has two main functions: in infected cell, it targets Gag and Gag-pol polyproteins to the plasma membrane via a multipartite membrane-binding signal, that includes its myristointegration complex. The myristoylation signal and the NLS exert conflicting influences its subcellular localization. The key regulation of these motifs might be phosphorylation of a portion of MA molecules on the C-terminal tyrosine at the time of virus maturation, by virion-associated cellular tyrosine kinase. Implicated in the release from host cell mediated by Vpu. Functionally, capsid protein p24 forms the conical core that encapsulates the genomic RNA-nucleocapsid complex in the virion. The core is constituted by capsid protein hexamer subunits. The core is disassembled soon after virion entry. Interaction with host PPIA/CYPA protects the virus from restriction by host TRIM5-alpha and from an unknown antiviral activity in host cells. This capsid restriction by TRIM5 is one of the factors which restricts SIV to the simian species. Its function is as follows. Nucleocapsid protein p7 encapsulates and protects viral dimeric unspliced (genomic) RNA. Binds these RNAs through its zinc fingers. Facilitates rearangement of nucleic acid secondary structure during retrotranscription of genomic RNA. This capability is referred to as nucleic acid chaperone activity. In terms of biological role, the aspartyl protease mediates proteolytic cleavages of Gag and Gag-Pol polyproteins during or shortly after the release of the virion from the plasma membrane. Cleavages take place as an ordered, step-wise cascade to yield mature proteins. This process is called maturation. Displays maximal activity during the budding process just prior to particle release from the cell. Also cleaves Nef and Vif, probably concomitantly with viral structural proteins on maturation of virus particles. Hydrolyzes host EIF4GI and PABP1 in order to shut off the capped cellular mRNA translation. The resulting inhibition of cellular protein synthesis serves to ensure maximal viral gene expression and to evade host immune response. Reverse transcriptase/ribonuclease H (RT) is a multifunctional enzyme that converts the viral dimeric RNA genome into dsDNA in the cytoplasm, shortly after virus entry into the cell. This enzyme displays a DNA polymerase activity that can copy either DNA or RNA templates, and a ribonuclease H (RNase H) activity that cleaves the RNA strand of RNA-DNA heteroduplexes in a partially processive 3' to 5' endonucleasic mode. Conversion of viral genomic RNA into dsDNA requires many steps. A tRNA binds to the primer-binding site (PBS) situated at the 5'-end of the viral RNA. RT uses the 3' end of the tRNA primer to perform a short round of RNA-dependent minus-strand DNA synthesis. The reading proceeds through the U5 region and ends after the repeated (R) region which is present at both ends of viral RNA. The portion of the RNA-DNA heteroduplex is digested by the RNase H, resulting in a ssDNA product attached to the tRNA primer. This ssDNA/tRNA hybridizes with the identical R region situated at the 3' end of viral RNA. This template exchange, known as minus-strand DNA strong stop transfer, can be either intra- or intermolecular. RT uses the 3' end of this newly synthesized short ssDNA to perform the RNA-dependent minus-strand DNA synthesis of the whole template. RNase H digests the RNA template except for two polypurine tracts (PPTs) situated at the 5'-end and near the center of the genome. It is not clear if both polymerase and RNase H activities are simultaneous. RNase H can probably proceed both in a polymerase-dependent (RNA cut into small fragments by the same RT performing DNA synthesis) and a polymerase-independent mode (cleavage of remaining RNA fragments by free RTs). Secondly, RT performs DNA-directed plus-strand DNA synthesis using the PPTs that have not been removed by RNase H as primers. PPTs and tRNA primers are then removed by RNase H. The 3' and 5' ssDNA PBS regions hybridize to form a circular dsDNA intermediate. Strand displacement synthesis by RT to the PBS and PPT ends produces a blunt ended, linear dsDNA copy of the viral genome that includes long terminal repeats (LTRs) at both ends. Functionally, integrase catalyzes viral DNA integration into the host chromosome, by performing a series of DNA cutting and joining reactions. This enzyme activity takes place after virion entry into a cell and reverse transcription of the RNA genome in dsDNA. The first step in the integration process is 3' processing. This step requires a complex comprising the viral genome, matrix protein, Vpr and integrase. This complex is called the pre-integration complex (PIC). The integrase protein removes 2 nucleotides from each 3' end of the viral DNA, leaving recessed CA OH's at the 3' ends. In the second step, the PIC enters cell nucleus. This process is mediated through integrase and Vpr proteins, and allows the virus to infect a non dividing cell. This ability to enter the nucleus is specific of lentiviruses, other retroviruses cannot and rely on cell division to access cell chromosomes. In the third step, termed strand transfer, the integrase protein joins the previously processed 3' ends to the 5' ends of strands of target cellular DNA at the site of integration. The 5'-ends are produced by integrase-catalyzed staggered cuts, 5 bp apart. A Y-shaped, gapped, recombination intermediate results, with the 5'-ends of the viral DNA strands and the 3' ends of target DNA strands remaining unjoined, flanking a gap of 5 bp. The last step is viral DNA integration into host chromosome. This involves host DNA repair synthesis in which the 5 bp gaps between the unjoined strands are filled in and then ligated. Since this process occurs at both cuts flanking the SIV genome, a 5 bp duplication of host DNA is produced at the ends of SIV integration. Alternatively, Integrase may catalyze the excision of viral DNA just after strand transfer, this is termed disintegration. The sequence is that of Gag-Pol polyprotein (gag-pol) from Pan troglodytes (Chimpanzee).